Consider the following 557-residue polypeptide: High-affinity hexose transporter ght4 (557 aa).

The Cytoplasmic segment spans residues 1–9; sequence MGRTLTSVL. The helical transmembrane segment at 10–30 threads the bilayer; the sequence is VVFISMAGWLGGADTGSISGI. Over 31–58 the chain is Extracellular; the sequence is LGMRDFQSRFADRYNPITNSYSYSAWRQ. The chain crosses the membrane as a helical span at residues 59–79; it reads ALLTGTVNAGCLFGAMLSSPF. At 80–87 the chain is on the cytoplasmic side; it reads TEAIGKKY. The helical transmembrane segment at 88–108 threads the bilayer; that stretch reads SIAFFSGCYIIGQILLVTAVP. Residues 109-112 lie on the Extracellular side of the membrane; the sequence is SWVQ. A helical transmembrane segment spans residues 113-133; sequence IMVGKLFTGLTIGALSVLSPG. Over 134-144 the chain is Cytoplasmic; it reads YQSEVAPPQIR. Residues 145–165 traverse the membrane as a helical segment; sequence GAVVSTYQLFQTCGTLIAACI. The Extracellular segment spans residues 166-179; that stretch reads NMGTHKLRKTASWR. A helical transmembrane segment spans residues 180–200; sequence TSFGINILWGIFLMVGVLFLP. Residues 201-266 lie on the Cytoplasmic side of the membrane; sequence ESPRYLIYKG…VFGKEVRYRT (66 aa). The chain crosses the membrane as a helical span at residues 267–285; sequence VLGFLTMLLRELIGNNYYF. The Extracellular segment spans residues 286–301; it reads YYATQVFKGTGMTDIF. A helical membrane pass occupies residues 302 to 322; it reads LPAVILGAINFGTTFGALYTI. The Cytoplasmic portion of the chain corresponds to 323-328; that stretch reads DNLGRR. A helical transmembrane segment spans residues 329–349; it reads NPLIFGAAFQSICFFIYAAVG. Residues 350-363 lie on the Extracellular side of the membrane; the sequence is DRKLIYKNGTSDHR. Asn-357 carries N-linked (GlcNAc...) asparagine glycosylation. A helical transmembrane segment spans residues 364–384; it reads AGAVMIVFSCLFLFSYCCSWG. Residues 385–404 lie on the Cytoplasmic side of the membrane; it reads PMGWVIVGETFPIRYRSKCA. A helical transmembrane segment spans residues 405 to 425; the sequence is AVATSGNWLGNFMVSFFTPFI. At 426 to 432 the chain is on the extracellular side; that stretch reads SNSIGFK. Residues 433–453 traverse the membrane as a helical segment; it reads LGYIYACINMTSAFQIFLMAK. The Cytoplasmic segment spans residues 454 to 557; that stretch reads ETKGLTLEEV…VSEESHPTWV (104 aa). A compositionally biased stretch (basic and acidic residues) spans 492–514; sequence KEEEKREREKSKGYRGQEERFIE. The segment at 492-557 is disordered; it reads KEEEKREREK…VSEESHPTWV (66 aa). The segment covering 524-536 has biased composition (low complexity); it reads SSASSESFASAGA. Over residues 547-557 the composition is skewed to basic and acidic residues; the sequence is NVSEESHPTWV.

The protein belongs to the major facilitator superfamily. Sugar transporter (TC 2.A.1.1) family.

Its subcellular location is the membrane. This is High-affinity hexose transporter ght4 (ght4) from Schizosaccharomyces pombe (strain 972 / ATCC 24843) (Fission yeast).